Reading from the N-terminus, the 409-residue chain is Failed axon connections homolog (409 aa).

A helical membrane pass occupies residues 68-88 (YLTGGALLAAAAYLLHELLVI). The tract at residues 372–409 (DEGAENSFSRTPDTDFTGHSLFDSDVDMDDYTEHEQCK) is disordered.

This sequence belongs to the FAX family.

It localises to the membrane. May play a role in axonal development. This Rattus norvegicus (Rat) protein is Failed axon connections homolog (Faxc).